Consider the following 329-residue polypeptide: MALQSCCSSSASVPATCSALCLAEATRAASLFVRPRAAARRLVLARCARGREGGESKAVQLVLGGRARDDGSESESSDDEDDDEPMQMTDEQRRTLRRKIREMMDRVPETAEITDPAERKAKMLELLTKYQLVVEEEDPNWPEDDEDGHGFSLGQFFDKITIKAEKKNDDDEEDDAKGNQSDKEIVWEDDNYIKPIRDVKTMDWDDTVFTDFGPLIVLVHNRYKRPQDNENARDQLVKAIEMFWEYNLPSPRCVAVDACAEPDLVKALNVSGFPEVLFTNAGKIVHRDKVVRSAEEWTRMMAFFYYKAARPPCLSEADGQGQEKVPLMS.

Residues 1 to 46 (MALQSCCSSSASVPATCSALCLAEATRAASLFVRPRAAARRLVLAR) constitute a chloroplast transit peptide. Residues 58-91 (AVQLVLGGRARDDGSESESSDDEDDDEPMQMTDE) are disordered. Residues 72–85 (SESESSDDEDDDEP) are compositionally biased toward acidic residues.

The protein localises to the plastid. It localises to the chloroplast stroma. Plays an essential role in early steps of chloroplast development. Involved in the regulation of plastid gene expression. Required for the proper function of the plastid transcriptional machinery and protein accumulation in thylakoid membranes. May function as molecular chaperone to ensure proper organization of the nucleoids in chloroplasts. This chain is Thioredoxin-like fold domain-containing protein MRL7L homolog, chloroplastic, found in Oryza sativa subsp. japonica (Rice).